The primary structure comprises 411 residues: Serine--tRNA ligase (411 aa).

226 to 228 contributes to the L-serine binding site; sequence TSE. 257–259 contacts ATP; sequence RKE. E280 serves as a coordination point for L-serine. 344-347 is an ATP binding site; that stretch reads EISS. S379 lines the L-serine pocket.

It belongs to the class-II aminoacyl-tRNA synthetase family. Type-1 seryl-tRNA synthetase subfamily. Homodimer. The tRNA molecule binds across the dimer.

Its subcellular location is the cytoplasm. It catalyses the reaction tRNA(Ser) + L-serine + ATP = L-seryl-tRNA(Ser) + AMP + diphosphate + H(+). The enzyme catalyses tRNA(Sec) + L-serine + ATP = L-seryl-tRNA(Sec) + AMP + diphosphate + H(+). The protein operates within aminoacyl-tRNA biosynthesis; selenocysteinyl-tRNA(Sec) biosynthesis; L-seryl-tRNA(Sec) from L-serine and tRNA(Sec): step 1/1. In terms of biological role, catalyzes the attachment of serine to tRNA(Ser). Is also able to aminoacylate tRNA(Sec) with serine, to form the misacylated tRNA L-seryl-tRNA(Sec), which will be further converted into selenocysteinyl-tRNA(Sec). The polypeptide is Serine--tRNA ligase (Campylobacter jejuni subsp. jejuni serotype O:6 (strain 81116 / NCTC 11828)).